The primary structure comprises 221 residues: Probable GTP-binding protein EngB (221 aa).

One can recognise an EngB-type G domain in the interval 32 to 205; sequence GIPQIAFAGR…RKIVDSLITT (174 aa). GTP contacts are provided by residues 40–47, 67–71, 85–88, 152–155, and 184–186; these read GRSNAGKS, GKTKL, DLPG, TKID, and VSN. Serine 47 and threonine 69 together coordinate Mg(2+).

This sequence belongs to the TRAFAC class TrmE-Era-EngA-EngB-Septin-like GTPase superfamily. EngB GTPase family. Mg(2+) serves as cofactor.

Functionally, necessary for normal cell division and for the maintenance of normal septation. In Leptospira borgpetersenii serovar Hardjo-bovis (strain JB197), this protein is Probable GTP-binding protein EngB.